The primary structure comprises 77 residues: Metallothionein-like protein 2 (77 aa).

This sequence belongs to the metallothionein superfamily. Type 15 family.

Metallothioneins have a high content of cysteine residues that bind various heavy metals. The sequence is that of Metallothionein-like protein 2 (MT1A) from Trifolium repens (Creeping white clover).